The chain runs to 662 residues: DNA ligase (662 aa).

NAD(+) is bound by residues 32-36 (DAEYD), 81-82 (SL), and Glu-112. Catalysis depends on Lys-114, which acts as the N6-AMP-lysine intermediate. NAD(+) contacts are provided by Arg-135, Glu-170, Lys-286, and Lys-310. 4 residues coordinate Zn(2+): Cys-402, Cys-405, Cys-420, and Cys-425. Residues 583–662 (PKGGPLTGST…AELHAMLRGE (80 aa)) enclose the BRCT domain.

The protein belongs to the NAD-dependent DNA ligase family. LigA subfamily. It depends on Mg(2+) as a cofactor. The cofactor is Mn(2+).

It catalyses the reaction NAD(+) + (deoxyribonucleotide)n-3'-hydroxyl + 5'-phospho-(deoxyribonucleotide)m = (deoxyribonucleotide)n+m + AMP + beta-nicotinamide D-nucleotide.. In terms of biological role, DNA ligase that catalyzes the formation of phosphodiester linkages between 5'-phosphoryl and 3'-hydroxyl groups in double-stranded DNA using NAD as a coenzyme and as the energy source for the reaction. It is essential for DNA replication and repair of damaged DNA. This chain is DNA ligase, found in Solibacter usitatus (strain Ellin6076).